We begin with the raw amino-acid sequence, 62 residues long: Large ribosomal subunit protein uL29 (62 aa).

This sequence belongs to the universal ribosomal protein uL29 family.

The protein is Large ribosomal subunit protein uL29 of Desulfosudis oleivorans (strain DSM 6200 / JCM 39069 / Hxd3) (Desulfococcus oleovorans).